Reading from the N-terminus, the 431-residue chain is Serine--tRNA ligase (431 aa).

237–239 (TAE) is a binding site for L-serine. 268-270 (RSE) contacts ATP. Residue glutamate 291 participates in L-serine binding. 355-358 (EISS) contacts ATP. Serine 390 serves as a coordination point for L-serine.

This sequence belongs to the class-II aminoacyl-tRNA synthetase family. Type-1 seryl-tRNA synthetase subfamily. As to quaternary structure, homodimer. The tRNA molecule binds across the dimer.

The protein resides in the cytoplasm. It carries out the reaction tRNA(Ser) + L-serine + ATP = L-seryl-tRNA(Ser) + AMP + diphosphate + H(+). The catalysed reaction is tRNA(Sec) + L-serine + ATP = L-seryl-tRNA(Sec) + AMP + diphosphate + H(+). It participates in aminoacyl-tRNA biosynthesis; selenocysteinyl-tRNA(Sec) biosynthesis; L-seryl-tRNA(Sec) from L-serine and tRNA(Sec): step 1/1. Catalyzes the attachment of serine to tRNA(Ser). Is also able to aminoacylate tRNA(Sec) with serine, to form the misacylated tRNA L-seryl-tRNA(Sec), which will be further converted into selenocysteinyl-tRNA(Sec). This is Serine--tRNA ligase from Neisseria meningitidis serogroup C (strain 053442).